Reading from the N-terminus, the 350-residue chain is MSKFVKKIKIIKPDDWHVHLRDNEILNQVIKYTGKFYKRAVIMPNLNSPITSCLKSIAYRNRILKSMHLNYKFKPLMTCYLTNSTSPKELEFGFSKKIFVAAKFYPNGCTTNSKTGIKKISDITPVLECMEKIGMPLLIHGEEINQNIDIYDREAKFIEKTLDPLRKKFPKLKIVLEHITTKESVEYIKNNDVNYLSATITPHHLMLNRNDMFYGGIQPYLYCLPILKKNKHRMALRKAISNGDKHFFLGSDTAPHLHKNKINMLGCAGIFNAPSSLLSYVKVFEEMRALKYLQSFCSENGPKFYNMPINKETITIIKKPCKIIKKINVGRNVIIPFLSGEILNWSIESD.

Zn(2+) is bound by residues H17 and H19. Substrate is bound by residues H19–R21 and N45. K103, H140, and H178 together coordinate Zn(2+). K103 bears the N6-carboxylysine mark. Substrate is bound at residue H140. L224 is a binding site for substrate. D252 provides a ligand contact to Zn(2+). D252 is an active-site residue. Substrate is bound by residues H256 and A268.

This sequence belongs to the metallo-dependent hydrolases superfamily. DHOase family. Class II DHOase subfamily. Homodimer. Zn(2+) is required as a cofactor.

It catalyses the reaction (S)-dihydroorotate + H2O = N-carbamoyl-L-aspartate + H(+). The protein operates within pyrimidine metabolism; UMP biosynthesis via de novo pathway; (S)-dihydroorotate from bicarbonate: step 3/3. Catalyzes the reversible cyclization of carbamoyl aspartate to dihydroorotate. The sequence is that of Dihydroorotase from Buchnera aphidicola subsp. Acyrthosiphon pisum (strain APS) (Acyrthosiphon pisum symbiotic bacterium).